Reading from the N-terminus, the 419-residue chain is UDP-N-acetylglucosamine 1-carboxyvinyltransferase (419 aa).

22-23 contacts phosphoenolpyruvate; that stretch reads KN. R93 lines the UDP-N-acetyl-alpha-D-glucosamine pocket. The active-site Proton donor is the C117. C117 is subject to 2-(S-cysteinyl)pyruvic acid O-phosphothioketal. Positions 307 and 329 each coordinate UDP-N-acetyl-alpha-D-glucosamine.

It belongs to the EPSP synthase family. MurA subfamily.

Its subcellular location is the cytoplasm. The enzyme catalyses phosphoenolpyruvate + UDP-N-acetyl-alpha-D-glucosamine = UDP-N-acetyl-3-O-(1-carboxyvinyl)-alpha-D-glucosamine + phosphate. It functions in the pathway cell wall biogenesis; peptidoglycan biosynthesis. In terms of biological role, cell wall formation. Adds enolpyruvyl to UDP-N-acetylglucosamine. This Shewanella denitrificans (strain OS217 / ATCC BAA-1090 / DSM 15013) protein is UDP-N-acetylglucosamine 1-carboxyvinyltransferase.